We begin with the raw amino-acid sequence, 261 residues long: Urease accessory protein UreD (261 aa).

This sequence belongs to the UreD family. As to quaternary structure, ureD, UreF and UreG form a complex that acts as a GTP-hydrolysis-dependent molecular chaperone, activating the urease apoprotein by helping to assemble the nickel containing metallocenter of UreC. The UreE protein probably delivers the nickel.

The protein localises to the cytoplasm. Its function is as follows. Required for maturation of urease via the functional incorporation of the urease nickel metallocenter. In Haemophilus influenzae (strain ATCC 51907 / DSM 11121 / KW20 / Rd), this protein is Urease accessory protein UreD.